Reading from the N-terminus, the 448-residue chain is Antizyme inhibitor 1 (448 aa).

Belongs to the Orn/Lys/Arg decarboxylase class-II family. ODC antizyme inhibitor subfamily. Monomer. Interacts with OAZ1 and OAZ3; this interaction disrupts the interaction between the antizyme and ODC1. Post-translationally, ubiquitinated, leading to its proteasomal degradation; a process that is reduced in presence of antizyme OAZ1. As to expression, expressed in various tissues including liver, heart and kidney.

It localises to the nucleus. Functionally, antizyme inhibitor (AZI) protein that positively regulates ornithine decarboxylase (ODC) activity and polyamine uptake. AZI is an enzymatically inactive ODC homolog that counteracts the negative effect of ODC antizymes (AZs) OAZ1, OAZ2 and OAZ3 on ODC activity by competing with ODC for antizyme-binding. Inhibits antizyme-dependent ODC degradation and releases ODC monomers from their inactive complex with antizymes, leading to formation of the catalytically active ODC homodimer and restoring polyamine production. This is Antizyme inhibitor 1 (Azin1) from Rattus norvegicus (Rat).